A 566-amino-acid polypeptide reads, in one-letter code: Cytokine-like nuclear factor N-PAC (566 aa).

Residues 9-70 form the PWWP domain; it reads VNDLVWAKMK…ETQIKPYLQF (62 aa). Disordered regions lie at residues 127-147 and 206-234; these read VASG…NTTT and MLDD…SSLD. The tract at residues 274-566 is dehydrogenase domain; that stretch reads RNIKASQLKF…ASAVYVRARF (293 aa). NAD(+)-binding positions include 284-298 and lysine 518; that span reads GFLG…IVKN.

Belongs to the HIBADH-related family. NP60 subfamily. As to quaternary structure, binds to mononucleosomes. Interacts with male-specific lethal (MSL) histone acetyltransferase complex at least composed of mof, msl-1, msl-2 and msl-3.

It is found in the chromosome. Its function is as follows. May have oxidoreductase activity. The protein is Cytokine-like nuclear factor N-PAC of Anopheles gambiae (African malaria mosquito).